A 1987-amino-acid polypeptide reads, in one-letter code: Transcriptional activator DEMETER (1987 aa).

Disordered regions lie at residues 246-378 (TGHE…NKSP), 392-415 (DLEN…SSGA), and 793-901 (MPPE…GPSG). Over residues 258 to 277 (SMQSIMDSSAVNATEATEQN) the composition is skewed to polar residues. Residues 341-364 (ATQEKVKSKETGSAKKKNLKESAT) are compositionally biased toward basic and acidic residues. The span at 813–829 (NTASISKGASKGNSSPV) shows a compositional bias: polar residues. Over residues 844–855 (PAKKGRAGRKKS) the composition is skewed to basic residues. Residues 955–1054 (KVDIDDETTR…AFMSLAARFP (100 aa)) form a DEMETER region. Disordered stretches follow at residues 1324 to 1351 (LPGM…QDEM) and 1439 to 1471 (TLAD…KNNM). 2 stretches are compositionally biased toward basic and acidic residues: residues 1338–1351 (EHQD…QDEM) and 1452–1469 (SLRK…RNKN). [4Fe-4S] cluster is bound by residues Cys1629, Cys1636, Cys1639, and Cys1645.

It belongs to the DNA glycosylase family. DEMETER subfamily. It depends on [4Fe-4S] cluster as a cofactor. In terms of tissue distribution, mainly expressed in immature flower buds, then decreases as the flower matures. Expressed in the ovule carpels, but not expressed in pollen stamens. Expressed in developing and mature ovules (stages 12-14), then strongly decreases after fertilization.

Its subcellular location is the nucleus. Transcriptional activator involved in gene imprinting. Catalyzes the release of 5-methylcytosine (5-meC) from DNA by a glycosylase/lyase mechanism. Allows the expression of the maternal copy of the imprinted MEA gene before fertilization, possibly by antagonizing or suppressing DNA methylation on target promoter. Probably acts by nicking the MEA promoter. Required for stable reproducible patterns of floral and vegetative development. This chain is Transcriptional activator DEMETER (DME), found in Arabidopsis thaliana (Mouse-ear cress).